We begin with the raw amino-acid sequence, 410 residues long: Benzene 1,2-dioxygenase system ferredoxin--NAD(+) reductase subunit (410 aa).

4 to 35 provides a ligand contact to FAD; it reads HVAIIGNGVAGFTTAQALRAEGYEGRISLIGE. Residue 145–173 coordinates NAD(+); that stretch reads RLLIVGGGLIGCEVATTARKLGLSVTILE.

Belongs to the bacterial ring-hydroxylating dioxygenase ferredoxin reductase family. As to quaternary structure, this dioxygenase system consists of four proteins: the two subunits of the hydroxylase component (BedC1 and BedC2), a ferredoxin (BedB) and a ferredoxin reductase (BedA). FAD serves as cofactor.

It carries out the reaction 2 reduced [2Fe-2S]-[ferredoxin] + NAD(+) + H(+) = 2 oxidized [2Fe-2S]-[ferredoxin] + NADH. Its pathway is aromatic compound metabolism; benzene degradation; catechol from benzene: step 1/2. Functionally, part of the electron transfer component of benzene 1,2-dioxygenase, transfers electrons from ferredoxin to NADH. The polypeptide is Benzene 1,2-dioxygenase system ferredoxin--NAD(+) reductase subunit (bedA) (Pseudomonas putida (Arthrobacter siderocapsulatus)).